Consider the following 185-residue polypeptide: Peptidyl-tRNA hydrolase (185 aa).

Tyr14 is a binding site for tRNA. The active-site Proton acceptor is the His19. Tyr64, Asn66, and Asn112 together coordinate tRNA.

It belongs to the PTH family. As to quaternary structure, monomer.

It localises to the cytoplasm. It carries out the reaction an N-acyl-L-alpha-aminoacyl-tRNA + H2O = an N-acyl-L-amino acid + a tRNA + H(+). In terms of biological role, hydrolyzes ribosome-free peptidyl-tRNAs (with 1 or more amino acids incorporated), which drop off the ribosome during protein synthesis, or as a result of ribosome stalling. Catalyzes the release of premature peptidyl moieties from peptidyl-tRNA molecules trapped in stalled 50S ribosomal subunits, and thus maintains levels of free tRNAs and 50S ribosomes. This Lactobacillus helveticus (strain DPC 4571) protein is Peptidyl-tRNA hydrolase.